We begin with the raw amino-acid sequence, 272 residues long: Acetylglutamate kinase (272 aa).

Substrate-binding positions include 41–42 (GG), R63, and N166.

Belongs to the acetylglutamate kinase family. ArgB subfamily.

Its subcellular location is the cytoplasm. The catalysed reaction is N-acetyl-L-glutamate + ATP = N-acetyl-L-glutamyl 5-phosphate + ADP. The protein operates within amino-acid biosynthesis; L-arginine biosynthesis; N(2)-acetyl-L-ornithine from L-glutamate: step 2/4. Catalyzes the ATP-dependent phosphorylation of N-acetyl-L-glutamate. The polypeptide is Acetylglutamate kinase (Anaeromyxobacter dehalogenans (strain 2CP-1 / ATCC BAA-258)).